A 102-amino-acid polypeptide reads, in one-letter code: UPF0058 protein MTH_224 (102 aa).

It belongs to the UPF0058 family.

In Methanothermobacter thermautotrophicus (strain ATCC 29096 / DSM 1053 / JCM 10044 / NBRC 100330 / Delta H) (Methanobacterium thermoautotrophicum), this protein is UPF0058 protein MTH_224.